Reading from the N-terminus, the 324-residue chain is Carbonic anhydrase 15 (324 aa).

Positions 1–18 (MWALDFLLSFLLIQLAAQ) are cleaved as a signal peptide. The Alpha-carbonic anhydrase domain maps to 23-293 (GTWCYDSQDP…LGGRRISASP (271 aa)). Catalysis depends on His90, which acts as the Proton acceptor. Zn(2+) is bound by residues His122, His124, and His147. The active site involves Tyr155. N-linked (GlcNAc...) asparagine glycosylation is found at Asn184, Asn194, and Asn203. Position 231–232 (231–232 (TT)) interacts with substrate. Residues 269–290 (LHPRPLTSNFRPQQPLGGRRIS) are disordered.

This sequence belongs to the alpha-carbonic anhydrase family. Requires Zn(2+) as cofactor.

It localises to the secreted. The enzyme catalyses hydrogencarbonate + H(+) = CO2 + H2O. Repressed by coumarins. Functionally, reversible hydration of carbon dioxide. The chain is Carbonic anhydrase 15 (Ca15) from Mus musculus (Mouse).